A 131-amino-acid polypeptide reads, in one-letter code: Glycine cleavage system H protein (131 aa).

The Lipoyl-binding domain maps to 24–106 (TVTIGITDHA…YEDGWIIKLK (83 aa)). K65 is modified (N6-lipoyllysine).

The protein belongs to the GcvH family. The glycine cleavage system is composed of four proteins: P, T, L and H. (R)-lipoate is required as a cofactor.

Its function is as follows. The glycine cleavage system catalyzes the degradation of glycine. The H protein shuttles the methylamine group of glycine from the P protein to the T protein. The polypeptide is Glycine cleavage system H protein (Chromohalobacter salexigens (strain ATCC BAA-138 / DSM 3043 / CIP 106854 / NCIMB 13768 / 1H11)).